The primary structure comprises 181 residues: Ferredoxin C 2, chloroplastic (181 aa).

The N-terminal 44 residues, 1–44 (MALILPCTFCTSLQKKNFPINRRYITNFRRGATTATCEFRIPVE), are a transit peptide targeting the chloroplast. Residues 59-151 (HKVTVHDRQR…DLEVETQDED (93 aa)) enclose the 2Fe-2S ferredoxin-type domain. Positions 97, 102, 105, and 135 each coordinate [2Fe-2S] cluster.

Belongs to the 2Fe2S plant-type ferredoxin family. [2Fe-2S] cluster is required as a cofactor.

The protein resides in the plastid. The protein localises to the chloroplast. In terms of biological role, ferredoxins are iron-sulfur proteins that transfer electrons in a wide variety of metabolic reactions. Mediates alternative electron partitioning in conditions of acceptor limitation at photosystem I. The polypeptide is Ferredoxin C 2, chloroplastic (Arabidopsis thaliana (Mouse-ear cress)).